The sequence spans 96 residues: uncharacterized protein (96 aa).

The N-terminal stretch at 1–28 (MNKKAIVGIFMSILMAGLVGCAGSSDAQ) is a signal peptide.

This is an uncharacterized protein from Butyrivibrio fibrisolvens.